We begin with the raw amino-acid sequence, 441 residues long: RUN domain-containing protein 3A (441 aa).

An interaction with RAP2A region spans residues 1–293; it reads MEASFVQTTM…LQLQLEEAAA (293 aa). Residues 52–184 enclose the RUN domain; sequence DDSSEEFVNF…IDFSFCLKGE (133 aa). Thr210 is subject to Phosphothreonine. A disordered region spans residues 211–234; sequence DEEERHSAESSTSEDNSPEHPYLP. Ser227 is modified (phosphoserine). The stretch at 262 to 317 forms a coiled coil; that stretch reads YLEELVRLRESQLKDLEAENRRLQLQLEEAAAQNQREKRELEGVILELQEQLTGLI. The segment covering 367–379 has biased composition (polar residues); that stretch reads PLSAEASLSSDSQ. The interval 367 to 399 is disordered; it reads PLSAEASLSSDSQRLGEGKRDEEPWGPIGKDPT. The segment covering 380-389 has biased composition (basic and acidic residues); it reads RLGEGKRDEE. Ser411 and Ser414 each carry phosphoserine.

It belongs to the RUNDC3 family. As to quaternary structure, interacts with the GTP-bound form of RAP2A.

May act as an effector of RAP2A in neuronal cells. This chain is RUN domain-containing protein 3A (RUNDC3A), found in Bos taurus (Bovine).